A 1059-amino-acid polypeptide reads, in one-letter code: IQ motif-containing protein H (1059 aa).

A coiled-coil region spans residues 6–35 (KNKDEVGNILVKVQDDLRQLKKNIVQFTVQ). Positions 245-267 (MESAESRLLRAPPPSAASASSDN) are disordered. An IQ domain is found at 401–430 (HQAAAVRIQTCWRRYSARTAYLIRLRSKWA).

This Danio rerio (Zebrafish) protein is IQ motif-containing protein H (iqch).